A 183-amino-acid polypeptide reads, in one-letter code: ATP synthase subunit delta (183 aa).

It belongs to the ATPase delta chain family. In terms of assembly, F-type ATPases have 2 components, F(1) - the catalytic core - and F(0) - the membrane proton channel. F(1) has five subunits: alpha(3), beta(3), gamma(1), delta(1), epsilon(1). CF(0) has four main subunits: a(1), b(1), b'(1) and c(10-14). The alpha and beta chains form an alternating ring which encloses part of the gamma chain. F(1) is attached to F(0) by a central stalk formed by the gamma and epsilon chains, while a peripheral stalk is formed by the delta, b and b' chains.

Its subcellular location is the cellular thylakoid membrane. Its function is as follows. F(1)F(0) ATP synthase produces ATP from ADP in the presence of a proton or sodium gradient. F-type ATPases consist of two structural domains, F(1) containing the extramembraneous catalytic core and F(0) containing the membrane proton channel, linked together by a central stalk and a peripheral stalk. During catalysis, ATP synthesis in the catalytic domain of F(1) is coupled via a rotary mechanism of the central stalk subunits to proton translocation. Functionally, this protein is part of the stalk that links CF(0) to CF(1). It either transmits conformational changes from CF(0) to CF(1) or is implicated in proton conduction. This is ATP synthase subunit delta from Trichormus variabilis (strain ATCC 29413 / PCC 7937) (Anabaena variabilis).